The following is a 500-amino-acid chain: Probable cytosol aminopeptidase (500 aa).

Residues K265 and D270 each contribute to the Mn(2+) site. K277 is an active-site residue. 3 residues coordinate Mn(2+): D288, D347, and E349. The active site involves R351.

It belongs to the peptidase M17 family. The cofactor is Mn(2+).

It is found in the cytoplasm. It catalyses the reaction Release of an N-terminal amino acid, Xaa-|-Yaa-, in which Xaa is preferably Leu, but may be other amino acids including Pro although not Arg or Lys, and Yaa may be Pro. Amino acid amides and methyl esters are also readily hydrolyzed, but rates on arylamides are exceedingly low.. It carries out the reaction Release of an N-terminal amino acid, preferentially leucine, but not glutamic or aspartic acids.. Presumably involved in the processing and regular turnover of intracellular proteins. Catalyzes the removal of unsubstituted N-terminal amino acids from various peptides. In Rickettsia africae (strain ESF-5), this protein is Probable cytosol aminopeptidase.